The chain runs to 201 residues: FMN-dependent NADH:quinone oxidoreductase (201 aa).

Residues Ser10, Ser16 to Ser18, and Met96 to Phe99 each bind FMN.

Belongs to the azoreductase type 1 family. Homodimer. The cofactor is FMN.

It catalyses the reaction 2 a quinone + NADH + H(+) = 2 a 1,4-benzosemiquinone + NAD(+). It carries out the reaction N,N-dimethyl-1,4-phenylenediamine + anthranilate + 2 NAD(+) = 2-(4-dimethylaminophenyl)diazenylbenzoate + 2 NADH + 2 H(+). Functionally, quinone reductase that provides resistance to thiol-specific stress caused by electrophilic quinones. Its function is as follows. Also exhibits azoreductase activity. Catalyzes the reductive cleavage of the azo bond in aromatic azo compounds to the corresponding amines. This is FMN-dependent NADH:quinone oxidoreductase from Sodalis glossinidius (strain morsitans).